A 574-amino-acid chain; its full sequence is Ankyrin repeat protein B18 (574 aa).

ANK repeat units follow at residues Thr56 to Ile87, Ile135 to Phe164, Asp167 to Ala213, Cys217 to Ile249, His253 to Glu285, and Glu327 to Ala356. Residues Lys541 to Val574 form the F-box domain.

The chain is Ankyrin repeat protein B18 from Variola virus (isolate Human/India/Ind3/1967) (VARV).